The sequence spans 244 residues: Putative outer membrane protein RC0105 (244 aa).

A signal peptide spans M1–A23.

Belongs to the OmpW/AlkL family.

It is found in the cell outer membrane. In Rickettsia conorii (strain ATCC VR-613 / Malish 7), this protein is Putative outer membrane protein RC0105.